The sequence spans 75 residues: Dermaseptin-SP3 (75 aa).

The first 22 residues, 1–22 (MAFLKKSLFLVLFLGLVSLSMC), serve as a signal peptide directing secretion. A propeptide spanning residues 23-45 (EEEKRENEVEEEQEDDEQSELRR) is cleaved from the precursor. Pro-72 carries the proline amide modification. The propeptide occupies 74–75 (EQ).

This sequence belongs to the frog skin active peptide (FSAP) family. Dermaseptin subfamily. As to expression, expressed by the skin glands.

It is found in the secreted. Its subcellular location is the target cell membrane. In terms of biological role, antimicrobial peptide with activity against Gram-positive and Gram-negative bacteria and fungi. Has been tested against E.coli (MIC=47.50-128 uM), S.aureus (MIC=189.98-512 uM), K.pneumoniae (MIC&gt;189.98 uM) and C.albicans (MIC&gt;189.98 uM). Probably acts by disturbing membrane functions with its alpha-helical amphipathic structure. May penetrate bacterial membranes, but stay at the mammalian membrane surface. Shows a very weak hemolytic activity. The chain is Dermaseptin-SP3 from Agalychnis spurrelli (Gliding leaf frog).